Reading from the N-terminus, the 210-residue chain is Na(+)-translocating NADH-quinone reductase subunit D (210 aa).

5 helical membrane passes run 42–62 (FVMT…VSLI), 72–92 (IIVQ…VLKA), 103–123 (VFVG…AFAM), 131–151 (LIDG…VGFF), and 178–198 (NGLM…IWVI).

Belongs to the NqrDE/RnfAE family. Composed of six subunits; NqrA, NqrB, NqrC, NqrD, NqrE and NqrF.

Its subcellular location is the cell inner membrane. The enzyme catalyses a ubiquinone + n Na(+)(in) + NADH + H(+) = a ubiquinol + n Na(+)(out) + NAD(+). Its activity is regulated as follows. This reaction is tightly coupled to the Na(+) pumping activity and specifically requires Na(+) for activity. Inhibited by korormicin and 2-N-heptyl-4-hydroxyquinoline N-oxide (HQNO). NQR complex catalyzes the reduction of ubiquinone-1 to ubiquinol by two successive reactions, coupled with the transport of Na(+) ions from the cytoplasm to the periplasm. NqrA to NqrE are probably involved in the second step, the conversion of ubisemiquinone to ubiquinol. The sequence is that of Na(+)-translocating NADH-quinone reductase subunit D from Vibrio alginolyticus.